Reading from the N-terminus, the 886-residue chain is Isoleucine--tRNA ligase (886 aa).

Residues 60–70 (PYANGDIHIGH) carry the 'HIGH' region motif. An L-isoleucyl-5'-AMP-binding site is contributed by Glu-546. Residues 587–591 (KMSKS) carry the 'KMSKS' region motif. Lys-590 lines the ATP pocket. Residues Cys-856, Cys-859, Cys-870, and Cys-873 each coordinate Zn(2+).

Belongs to the class-I aminoacyl-tRNA synthetase family. IleS type 1 subfamily. As to quaternary structure, monomer. The cofactor is Zn(2+).

The protein resides in the cytoplasm. It catalyses the reaction tRNA(Ile) + L-isoleucine + ATP = L-isoleucyl-tRNA(Ile) + AMP + diphosphate. Catalyzes the attachment of isoleucine to tRNA(Ile). As IleRS can inadvertently accommodate and process structurally similar amino acids such as valine, to avoid such errors it has two additional distinct tRNA(Ile)-dependent editing activities. One activity is designated as 'pretransfer' editing and involves the hydrolysis of activated Val-AMP. The other activity is designated 'posttransfer' editing and involves deacylation of mischarged Val-tRNA(Ile). In Mesomycoplasma hyopneumoniae (strain 232) (Mycoplasma hyopneumoniae), this protein is Isoleucine--tRNA ligase.